A 386-amino-acid polypeptide reads, in one-letter code: 1-deoxy-D-xylulose 5-phosphate reductoisomerase (386 aa).

Residues Thr-7, Gly-8, Ser-9, Ile-10, Ala-33, and Asn-124 each coordinate NADPH. Residue Lys-125 coordinates 1-deoxy-D-xylulose 5-phosphate. Glu-126 provides a ligand contact to NADPH. Asp-148 serves as a coordination point for Mn(2+). Positions 149, 150, 174, and 197 each coordinate 1-deoxy-D-xylulose 5-phosphate. Residue Glu-150 coordinates Mn(2+). Gly-203 is an NADPH binding site. Residues Ser-210, Asn-215, Lys-216, and Glu-219 each contribute to the 1-deoxy-D-xylulose 5-phosphate site. Position 219 (Glu-219) interacts with Mn(2+).

Belongs to the DXR family. The cofactor is Mg(2+). It depends on Mn(2+) as a cofactor.

It catalyses the reaction 2-C-methyl-D-erythritol 4-phosphate + NADP(+) = 1-deoxy-D-xylulose 5-phosphate + NADPH + H(+). Its pathway is isoprenoid biosynthesis; isopentenyl diphosphate biosynthesis via DXP pathway; isopentenyl diphosphate from 1-deoxy-D-xylulose 5-phosphate: step 1/6. Functionally, catalyzes the NADPH-dependent rearrangement and reduction of 1-deoxy-D-xylulose-5-phosphate (DXP) to 2-C-methyl-D-erythritol 4-phosphate (MEP). This is 1-deoxy-D-xylulose 5-phosphate reductoisomerase from Kitasatospora griseola (Streptomyces griseolosporeus).